A 636-amino-acid polypeptide reads, in one-letter code: TNFAIP3-interacting protein 1 (636 aa).

A coiled-coil region spans residues 20–73 (EASAAFERLVKENSRLKEKMQGIKMLGELLEESQMEATRLRQKAEELVKDNELL). Positions 61–71 (QKAEELVKDNE) are enriched in basic and acidic residues. 2 disordered regions span residues 61 to 151 (QKAE…GPLP) and 252 to 283 (MSNGNKEGASGRPGSPKMEGTGKKAVAGQQQA). S77 bears the Phosphoserine mark. Residues 94-412 (SNVTASPTAP…SPLTRQREYQ (319 aa)) form an interaction with Nef region. The segment covering 131 to 142 (EEQNSPESSSHA) has biased composition (polar residues). Residues 196–258 (SKVHKNEQRT…KLLMSNGNKE (63 aa)) adopt a coiled-coil conformation. S284 is modified (phosphoserine). Positions 294–535 (VALGAAEKKV…RKAKASGERY (242 aa)) form a coiled coil. The interval 351–367 (DLEAEREQKQRDFDRKL) is interaction with Shigella flexneri ipah9.8. S403 bears the Phosphoserine mark. A required for inhibitory activity of TNF-induced NF-kappa-B activation region spans residues 431 to 588 (TPPSSPPTAF…MEHPPPLPNS (158 aa)). The residue at position 438 (T438) is a Phosphothreonine. S442 is modified (phosphoserine). The ubiquitin-binding domain (UBD) stretch occupies residues 452-510 (KQELVTQNELLKQQVKIFEEDFQRERSDRERMNEEKEELKKQVEKLQAQVTLSNAQLKA). The Nuclear localization signal motif lies at 524 to 530 (QKRKAKA). Position 552 is a phosphotyrosine (Y552). R571 carries the post-translational modification Asymmetric dimethylarginine. An Asymmetric dimethylarginine; alternate modification is found at R599. R599 is modified (omega-N-methylarginine; alternate). The disordered stretch occupies residues 603–636 (GGVRNPNQSSQVMDPPTARPTEPESPKNDREGPQ). Positions 623–636 (TEPESPKNDREGPQ) are enriched in basic and acidic residues. Residue S627 is modified to Phosphoserine.

As to quaternary structure, interacts with TNFAIP3 and IKBKG (polyubiquitinated); facilitates TNFAIP3-mediated de-ubiquitination of NEMO/IKBKG. Interacts with polyubiquitin. Interacts with MAPK1, SELPLG and PIK3CD. Interacts with IRAK1 (polyubiquitinated). Interacts with MYD88; the interaction is indicative for participation in an activated TLR-signaling complex. Interacts with HIV-1 matrix protein. Interacts with TAX1BP1. (Microbial infection) Interacts with Shigella flexneri ipah9.8; the interaction promotes polyubiquitination of IKBKG. Phosphorylation at Tyr-552 by SRC-family kinases recruits phosphoinositide-3-kinase (PI3K) PIK3CD:p85 heterodimer which results in integrin activation and leukocyte adhesion to activated endothelium during inflammation. Ubiquitous. Strongly expressed in peripheral blood lymphocytes, spleen and skeletal muscle, and is weakly expressed in the brain. In peripheral blood mononucleocytes, isoform 4 is mainly expressed and isoform 1 and isoform 7 are almost not expressed. Expression of isoform 1 and isoform 7 increases in leukemic cells.

The protein resides in the cytoplasm. It localises to the nucleus. Its function is as follows. Inhibits NF-kappa-B activation and TNF-induced NF-kappa-B-dependent gene expression by regulating TAX1BP1 and A20/TNFAIP3-mediated deubiquitination of IKBKG; proposed to link A20/TNFAIP3 to ubiquitinated IKBKG. Involved in regulation of EGF-induced ERK1/ERK2 signaling pathway; blocks MAPK3/MAPK1 nuclear translocation and MAPK1-dependent transcription. Increases cell surface CD4(T4) antigen expression. Involved in the anti-inflammatory response of macrophages and positively regulates TLR-induced activation of CEBPB. Involved in the prevention of autoimmunity; this function implicates binding to polyubiquitin. Involved in leukocyte integrin activation during inflammation; this function is mediated by association with SELPLG and dependent on phosphorylation by SRC-family kinases. Interacts with HIV-1 matrix protein and is packaged into virions and overexpression can inhibit viral replication. May regulate matrix nuclear localization, both nuclear import of PIC (Preintegration complex) and export of GAG polyprotein and viral genomic RNA during virion production. In case of infection, promotes association of IKBKG with Shigella flexneri E3 ubiquitin-protein ligase ipah9.8 p which in turn promotes polyubiquitination of IKBKG leading to its proteasome-dependent degradation and thus is perturbing NF-kappa-B activation during bacterial infection. This Homo sapiens (Human) protein is TNFAIP3-interacting protein 1 (TNIP1).